Reading from the N-terminus, the 450-residue chain is Pancreatic triacylglycerol lipase (450 aa).

Cystine bridges form between Cys-4-Cys-10, Cys-91-Cys-102, and Cys-91-Cys-104. Ser-153 (nucleophile) is an active-site residue. Asn-167 is a glycosylation site (N-linked (GlcNAc...) asparagine). The active-site Charge relay system is Asp-177. Residues Glu-188, Arg-191, Asp-193, and Asp-196 each coordinate Ca(2+). A disulfide bond links Cys-238 and Cys-262. The Charge relay system role is filled by His-264. 3 disulfides stabilise this stretch: Cys-286-Cys-297, Cys-300-Cys-305, and Cys-434-Cys-450. In terms of domain architecture, PLAT spans 339 to 450; sequence WRYKVSVTLS…EEVLLTLNPC (112 aa).

The protein belongs to the AB hydrolase superfamily. Lipase family. As to quaternary structure, forms a 1:1 stoichiometric complex with (pro)colipase/CLPS.

The protein localises to the secreted. The catalysed reaction is a triacylglycerol + H2O = a diacylglycerol + a fatty acid + H(+). The enzyme catalyses 1,2,3-tributanoylglycerol + H2O = dibutanoylglycerol + butanoate + H(+). It catalyses the reaction 1,2,3-tri-(9Z-octadecenoyl)-glycerol + H2O = di-(9Z)-octadecenoylglycerol + (9Z)-octadecenoate + H(+). It carries out the reaction all-trans-retinyl hexadecanoate + H2O = all-trans-retinol + hexadecanoate + H(+). The catalysed reaction is 1,2-di-(9Z-octadecenoyl)-glycerol + H2O = (9Z-octadecenoyl)-glycerol + (9Z)-octadecenoate + H(+). With respect to regulation, inhibited by bile salts, is reactivated by (pro)colipase/CLPS. In terms of biological role, plays an important role in fat metabolism. It preferentially splits the esters of long-chain fatty acids at positions 1 and 3, producing mainly 2-monoacylglycerol and free fatty acids, and shows considerably higher activity against insoluble emulsified substrates than against soluble ones. This Sus scrofa (Pig) protein is Pancreatic triacylglycerol lipase (PNLIP).